The primary structure comprises 335 residues: Urokinase plasminogen activator surface receptor (335 aa).

Residues 1-22 form the signal peptide; that stretch reads MGHPLLLPLLLLLHTCVPASWG. UPAR/Ly6 domains lie at 23–114, 115–213, and 214–305; these read LRCM…RSRY, LECI…PQNG, and HQCY…YRKG. 3 cysteine pairs are disulfide-bonded: Cys-25–Cys-46, Cys-28–Cys-34, and Cys-39–Cys-67. An N-linked (GlcNAc...) asparagine glycan is attached at Asn-74. Intrachain disulfides connect Cys-93–Cys-98, Cys-117–Cys-144, Cys-120–Cys-127, Cys-137–Cys-169, Cys-175–Cys-192, Cys-193–Cys-198, Cys-216–Cys-244, Cys-219–Cys-227, Cys-237–Cys-263, Cys-269–Cys-287, and Cys-288–Cys-293. N-linked (GlcNAc...) asparagine glycosylation is found at Asn-184, Asn-194, Asn-222, and Asn-255. Gly-305 carries GPI-anchor amidated glycine lipidation. Residues 306 to 335 constitute a propeptide, removed in mature form; sequence AAPQPGPAHLSLTITLLMTARLWGGTLLWT.

In terms of assembly, monomer. Interacts (via the UPAR/Ly6 domains) with SRPX2. Interacts with MRC2. Interacts with FAP (seprase); the interaction occurs at the cell surface of invadopodia membrane. Interacts with SORL1 (via N-terminal ectodomain); this interaction decreases PLAUR internalization. The ternary complex composed of PLAUR-PLAU-SERPINE1 also interacts with SORL1.

It is found in the cell membrane. The protein resides in the cell projection. Its subcellular location is the invadopodium membrane. Functionally, acts as a receptor for urokinase plasminogen activator. Plays a role in localizing and promoting plasmin formation. Mediates the proteolysis-independent signal transduction activation effects of U-PA. It is subject to negative-feedback regulation by U-PA which cleaves it into an inactive form. The sequence is that of Urokinase plasminogen activator surface receptor (PLAUR) from Chlorocebus aethiops (Green monkey).